Consider the following 220-residue polypeptide: Exodeoxyribonuclease 10 (220 aa).

Mg(2+) serves as cofactor.

Capable of degrading both single-strand and double-strand DNA with 3' to 5' polarity. Has higher affinity for ssDNA ends than for dsDNA. This is Exodeoxyribonuclease 10 (exoX) from Escherichia coli O6:H1 (strain CFT073 / ATCC 700928 / UPEC).